The sequence spans 510 residues: MIWHVQNENFILDSTRIFMKAFHLLLFHGSFIFPECILIFGLILLLMIDSTSDQKDRPWFYFISSTSLVMSITALLFRWREEPMISFSGNFQTNNFNEIFQFLILLCSTLCIPLSVEYIECTEMAITEFLLFVLTATLGGMFLCGANDLITIFVAPECFSLCSYLLSGYTKRDVRSNEATTKYLLMGGASSSILVHGFSWLYGSSGGEIELQEIVNGLINTQMYNSPGISIALLSITVGIGFKLSPAPFHQWTPDVYEGSPTPVVAFLSVTSKVAASALATRIFDIPFYFSSNEWHLLLEILAILSMILGNLIAITQTSMKRMLAYSSIGQIGYVIIGIIVGDSNDGYASMITYMLFYISMNLGTFARIVSFGPRTGTDNIRDYAGLYTKDPFLALSSALCLLSLGGIPPLAGFFGKLHLFWCGWQAGLYFLVSIGLLTSVVSIYYYLKIIKLLMTGRNKEITPHVRNYRRSPLRSNNSIELSMIVCVIASTIPGISMNPIIAIAQDTFF.

A run of 13 helical transmembrane segments spans residues 24-44 (LLLF…GLIL), 59-79 (WFYF…LFRW), 99-119 (IFQF…VEYI), 124-144 (MAIT…MFLC), 149-169 (LITI…LSGY), 183-203 (YLLM…WLYG), 229-249 (ISIA…PAPF), 295-315 (WHLL…LIAI), 323-343 (MLAY…IVGD), 347-367 (GYAS…GTFA), 395-415 (ALSS…AGFF), 418-438 (LHLF…IGLL), and 484-504 (MIVC…IIAI).

Belongs to the complex I subunit 2 family. In terms of assembly, NDH is composed of at least 16 different subunits, 5 of which are encoded in the nucleus.

It localises to the plastid. The protein resides in the chloroplast thylakoid membrane. The enzyme catalyses a plastoquinone + NADH + (n+1) H(+)(in) = a plastoquinol + NAD(+) + n H(+)(out). It catalyses the reaction a plastoquinone + NADPH + (n+1) H(+)(in) = a plastoquinol + NADP(+) + n H(+)(out). In terms of biological role, NDH shuttles electrons from NAD(P)H:plastoquinone, via FMN and iron-sulfur (Fe-S) centers, to quinones in the photosynthetic chain and possibly in a chloroplast respiratory chain. The immediate electron acceptor for the enzyme in this species is believed to be plastoquinone. Couples the redox reaction to proton translocation, and thus conserves the redox energy in a proton gradient. This chain is NAD(P)H-quinone oxidoreductase subunit 2 A, chloroplastic, found in Amborella trichopoda.